Reading from the N-terminus, the 664-residue chain is DNA damage checkpoint protein LCD1 (664 aa).

Residues 38–107 are a coiled coil; sequence EQLMKAKGEV…KFMLLEQKHL (70 aa). Disordered regions lie at residues 61-81 and 109-132; these read LREH…SHEE and TPRN…PIEN.

Forms a complex with MEC1.

It is found in the cytoplasm. Its subcellular location is the nucleus. Its function is as follows. Forms a complex with the serine/threonine kinase MEC1 which activates checkpoint signaling upon genotoxic stresses. The MEC1-LCD1 complex is recruited to DNA lesions in order to initiates the DNA repair by homologous recombination. Required for cell growth and meiotic recombination. The chain is DNA damage checkpoint protein LCD1 (LCD1) from Kluyveromyces lactis (strain ATCC 8585 / CBS 2359 / DSM 70799 / NBRC 1267 / NRRL Y-1140 / WM37) (Yeast).